Reading from the N-terminus, the 414-residue chain is Serine/arginine-rich splicing factor SR45 (414 aa).

2 disordered regions span residues 1–95 and 175–414; these read MAKP…KAVQ and LPPR…PRKT. Composition is skewed to low complexity over residues 10-34 and 42-60; these read SPSVSGSSSRSSSRSRSGSSPSRSI and RSLSSSSSPSRSVSSGSRS. The short motif at 62–69 is the Nuclear localization signal 1 element; the sequence is PRRGKSPA. The residue at position 77 (serine 77) is a Phosphoserine. Positions 98–176 constitute an RRM domain; the sequence is LVLHVDSLSR…KVVKATFTLP (79 aa). The span at 176–191 shows a compositional bias: low complexity; it reads PPRQKVSSPPKPVSAA. Over residues 205–220 the composition is skewed to basic and acidic residues; the sequence is DAEKDGGPRRPRETSP. The required for isoform 1 function in petal development stretch occupies residues 218–219; that stretch reads TS. The segment covering 228 to 243 has biased composition (basic residues); that stretch reads PRRRSPLPRRGLSPRR. The Nuclear localization signal 2 motif lies at 229–236; it reads RRRSPLPR. Position 256 is a phosphoserine (serine 256). 3 consecutive short sequence motifs (nuclear localization signal) follow at residues 284–291, 318–325, and 338–345; these read PRRYRSPP, PRRLRSPP, and IRRPGRSR. Basic residues-rich tracts occupy residues 285–343 and 352–363; these read RRYR…RPGR and RKGRGPAGRRGR. The span at 364–373 shows a compositional bias: low complexity; it reads SSSYSSSPSP. Residues 373-380 carry the Nuclear localization signal 6 motif; that stretch reads PRRIPRKI. Over residues 375-394 the composition is skewed to basic residues; it reads RIPRKISRSRSPKRPLRGKR. The segment covering 404–414 has biased composition (pro residues); sequence SPPPPPPPRKT.

Belongs to the splicing factor SR family. SR45 subfamily. As to quaternary structure, component of the spliceosome. Interacts with AFC2, U2AF35A, U2AF35B, RNU1, SCL33 and SKIP. The interaction with AFC2 depends on phosphorylation status. Interaction with RNU1 defines initial 5' splice sites and interaction with U2AF35B 3' splice sites in the early stage of spliceosome assembly. Phosphorylated by AFC2. The phosphorylation status regulates intranuclear distribution. In terms of tissue distribution, especially present in actively growing regions and dividing cells. Mostly expressed in roots (primary and secondary root meristem), shoot apical meristem (SAM), leaf primordia, pollen and inflorescence, and, to a lower extent, in leaves, vascular tissue, hydathode and fruits.

Its subcellular location is the nucleus speckle. It is found in the nucleus. The protein localises to the nucleoplasm. Its function is as follows. Involved in 5' and 3' splicing site selection of introns, and may bridge the 5' and 3' components of the spliceosome. Isoform 1 is required during flower petal development and isoform 2 is involved in root growth. Negatively regulates glucose and abscisic acid (ABA) signaling during early seedling development. Involved in the RNA-directed DNA methylation pathway. Modulates KIN10 stability in response to sugars, probably through the splicing regulation of 5PTASE13, a protein implicated in the proteasomal degradation of KIN10. The chain is Serine/arginine-rich splicing factor SR45 from Arabidopsis thaliana (Mouse-ear cress).